We begin with the raw amino-acid sequence, 231 residues long: Dephospho-CoA kinase domain-containing protein (231 aa).

Positions 3–207 constitute a DPCK domain; the sequence is LVGLTGGIAS…RSLEYLPLRF (205 aa). An ATP-binding site is contributed by 8-15; that stretch reads GGIASGKS.

It belongs to the CoaE family.

The chain is Dephospho-CoA kinase domain-containing protein (DCAKD) from Homo sapiens (Human).